We begin with the raw amino-acid sequence, 143 residues long: Ribonuclease P protein component 2 (143 aa).

Belongs to the eukaryotic/archaeal RNase P protein component 2 family. In terms of assembly, consists of a catalytic RNA component and at least 4-5 protein subunits.

It is found in the cytoplasm. The enzyme catalyses Endonucleolytic cleavage of RNA, removing 5'-extranucleotides from tRNA precursor.. Its function is as follows. Part of ribonuclease P, a protein complex that generates mature tRNA molecules by cleaving their 5'-ends. In Saccharolobus solfataricus (strain ATCC 35092 / DSM 1617 / JCM 11322 / P2) (Sulfolobus solfataricus), this protein is Ribonuclease P protein component 2.